The following is an 860-amino-acid chain: Leucine--tRNA ligase (860 aa).

The 'HIGH' region motif lies at 42–52 (PYPSGRLHMGH). Residues 619-623 (KMSKS) carry the 'KMSKS' region motif. K622 provides a ligand contact to ATP.

This sequence belongs to the class-I aminoacyl-tRNA synthetase family.

It is found in the cytoplasm. It carries out the reaction tRNA(Leu) + L-leucine + ATP = L-leucyl-tRNA(Leu) + AMP + diphosphate. In Citrobacter koseri (strain ATCC BAA-895 / CDC 4225-83 / SGSC4696), this protein is Leucine--tRNA ligase.